Here is a 644-residue protein sequence, read N- to C-terminus: Threonine--tRNA ligase (644 aa).

The 63-residue stretch at 8–70 (VKAMVITLRD…EEDGELEILT (63 aa)) folds into the TGS domain. The interval 251-541 (DHRKLGKELD…LTEHFAGAFP (291 aa)) is catalytic. Zn(2+)-binding residues include C342, H393, and H518.

Belongs to the class-II aminoacyl-tRNA synthetase family. As to quaternary structure, homodimer. The cofactor is Zn(2+).

The protein resides in the cytoplasm. It catalyses the reaction tRNA(Thr) + L-threonine + ATP = L-threonyl-tRNA(Thr) + AMP + diphosphate + H(+). In terms of biological role, catalyzes the attachment of threonine to tRNA(Thr) in a two-step reaction: L-threonine is first activated by ATP to form Thr-AMP and then transferred to the acceptor end of tRNA(Thr). Also edits incorrectly charged L-seryl-tRNA(Thr). This is Threonine--tRNA ligase from Caldanaerobacter subterraneus subsp. tengcongensis (strain DSM 15242 / JCM 11007 / NBRC 100824 / MB4) (Thermoanaerobacter tengcongensis).